The sequence spans 202 residues: Recombination protein RecR (202 aa).

The C4-type zinc-finger motif lies at 61-76 (CARCNSFTEDDVCVIC). Residues 84–179 (SLLCIVETPA…KVTRLARGVP (96 aa)) enclose the Toprim domain.

It belongs to the RecR family.

May play a role in DNA repair. It seems to be involved in an RecBC-independent recombinational process of DNA repair. It may act with RecF and RecO. This Bordetella avium (strain 197N) protein is Recombination protein RecR.